The chain runs to 513 residues: Probable DNA ligase (513 aa).

Glutamate 215 provides a ligand contact to ATP. The active-site N6-AMP-lysine intermediate is the lysine 217. The ATP site is built by arginine 222, arginine 237, glutamate 266, phenylalanine 306, arginine 378, and lysine 384.

This sequence belongs to the ATP-dependent DNA ligase family. Requires Mg(2+) as cofactor.

It carries out the reaction ATP + (deoxyribonucleotide)n-3'-hydroxyl + 5'-phospho-(deoxyribonucleotide)m = (deoxyribonucleotide)n+m + AMP + diphosphate.. Functionally, DNA ligase that seals nicks in double-stranded DNA during DNA replication, DNA recombination and DNA repair. This Mycobacterium marinum (strain ATCC BAA-535 / M) protein is Probable DNA ligase.